We begin with the raw amino-acid sequence, 116 residues long: Thioredoxin H-type (116 aa).

One can recognise a Thioredoxin domain in the interval 2–115 (AEEAQVIACH…HKIAVHAPIT (114 aa)). Residues cysteine 39 and cysteine 42 each act as nucleophile in the active site. The cysteines at positions 39 and 42 are disulfide-linked.

The protein belongs to the thioredoxin family. Plant H-type subfamily.

The protein localises to the cytoplasm. Participates in various redox reactions through the reversible oxidation of the active center dithiol to a disulfide. The H form is known to activate a number of cytosolic enzymes. This Fagopyrum esculentum (Common buckwheat) protein is Thioredoxin H-type.